A 319-amino-acid chain; its full sequence is Acetyl-coenzyme A carboxylase carboxyl transferase subunit alpha (319 aa).

In terms of domain architecture, CoA carboxyltransferase C-terminal spans 43 to 296; the sequence is LKQKSVELTQ…KTQLLLDLVE (254 aa).

This sequence belongs to the AccA family. Acetyl-CoA carboxylase is a heterohexamer composed of biotin carboxyl carrier protein (AccB), biotin carboxylase (AccC) and two subunits each of ACCase subunit alpha (AccA) and ACCase subunit beta (AccD).

It localises to the cytoplasm. The enzyme catalyses N(6)-carboxybiotinyl-L-lysyl-[protein] + acetyl-CoA = N(6)-biotinyl-L-lysyl-[protein] + malonyl-CoA. The protein operates within lipid metabolism; malonyl-CoA biosynthesis; malonyl-CoA from acetyl-CoA: step 1/1. Component of the acetyl coenzyme A carboxylase (ACC) complex. First, biotin carboxylase catalyzes the carboxylation of biotin on its carrier protein (BCCP) and then the CO(2) group is transferred by the carboxyltransferase to acetyl-CoA to form malonyl-CoA. The protein is Acetyl-coenzyme A carboxylase carboxyl transferase subunit alpha of Blochmanniella floridana.